The following is a 489-amino-acid chain: MTFRNCVAVDLGASSGRVMLARYQRECRSLTLREIHRFKNGLHSQNGYVTWNVDSLESAIRLGLNKVCEEGIRIDSIGIDTWGVDFVLLDQQGQRVGLPVAYRDSRSNGLMAQAQQQLGKRDIYQRSGIQFLPFNTLYQLRALTEQQPELIPHIAHALLMPDYFSYRLTGKMNWEYTNATTTQLVNINSDDWDESLLAWSGANKAWFGRPTHPGNVIGHWICPQGNEIPVVAVASHDTASAVIASPLNGSRAAYLSSGTWSLMGFESQTPFTNDTALAANITNEGGAEGRYRVLKNIMGLWLLQRVLQERQINDLPALIAATQALPACRFIINPNDDRFINPEAMCSEIQAACRETAQPIPESDAELARCIFDSLALLYADVLHELAQLRGEDFSQLHIVGGGCQNTLLNQLCADACGIRVIAGPVEASTLGNIGIQLMTLDELNNVDDFRQVVSTTANLTTFTPNPDSEIAHYVAQIHSTRQTKELCA.

Residue 13–17 (ASSGR) coordinates ATP. A disulfide bridge links C68 with C222. Substrate-binding positions include G83 and 236–238 (HDT). D237 (proton acceptor) is an active-site residue. An ATP-binding site is contributed by T259. N296 lines the substrate pocket. Q304 is a binding site for ATP. An intrachain disulfide couples C353 to C370. Residue G402 participates in ATP binding. A disulfide bridge connects residues C413 and C417.

This sequence belongs to the rhamnulokinase family. Monomer. Mg(2+) is required as a cofactor.

It catalyses the reaction L-rhamnulose + ATP = L-rhamnulose 1-phosphate + ADP + H(+). Its pathway is carbohydrate degradation; L-rhamnose degradation; glycerone phosphate from L-rhamnose: step 2/3. Functionally, involved in the catabolism of L-rhamnose (6-deoxy-L-mannose). Catalyzes the transfer of the gamma-phosphate group from ATP to the 1-hydroxyl group of L-rhamnulose to yield L-rhamnulose 1-phosphate. This chain is Rhamnulokinase, found in Escherichia coli (strain 55989 / EAEC).